The chain runs to 609 residues: UvrABC system protein C (609 aa).

The GIY-YIG domain occupies 16-94; that stretch reads SSAGVYRMYD…IKQYMPRYNV (79 aa). The UVR domain maps to 203–238; the sequence is QQVIATLVGKMEQAAMDLNYEDAARYRDQISALRRV.

The protein belongs to the UvrC family. Interacts with UvrB in an incision complex.

The protein resides in the cytoplasm. Functionally, the UvrABC repair system catalyzes the recognition and processing of DNA lesions. UvrC both incises the 5' and 3' sides of the lesion. The N-terminal half is responsible for the 3' incision and the C-terminal half is responsible for the 5' incision. This is UvrABC system protein C from Shewanella loihica (strain ATCC BAA-1088 / PV-4).